Here is an 857-residue protein sequence, read N- to C-terminus: DNA mismatch repair protein MutS (857 aa).

613 to 620 is a binding site for ATP; the sequence is GPNMGGKS. The interval 797–820 is disordered; the sequence is TSLPHEQPAAHKAKDAPQVPHQSD.

This sequence belongs to the DNA mismatch repair MutS family.

Functionally, this protein is involved in the repair of mismatches in DNA. It is possible that it carries out the mismatch recognition step. This protein has a weak ATPase activity. This Pseudomonas putida (strain ATCC 700007 / DSM 6899 / JCM 31910 / BCRC 17059 / LMG 24140 / F1) protein is DNA mismatch repair protein MutS.